Reading from the N-terminus, the 218-residue chain is Large ribosomal subunit protein bL25 (218 aa).

Residues 197-218 (PAEESGEKPVAHIEEKESTEKE) are disordered. The span at 201-218 (SGEKPVAHIEEKESTEKE) shows a compositional bias: basic and acidic residues.

Belongs to the bacterial ribosomal protein bL25 family. CTC subfamily. As to quaternary structure, part of the 50S ribosomal subunit; part of the 5S rRNA/L5/L18/L25 subcomplex. Contacts the 5S rRNA. Binds to the 5S rRNA independently of L5 and L18.

Its function is as follows. This is one of the proteins that binds to the 5S RNA in the ribosome where it forms part of the central protuberance. This is Large ribosomal subunit protein bL25 from Dehalococcoides mccartyi (strain ATCC BAA-2100 / JCM 16839 / KCTC 5957 / BAV1).